The chain runs to 334 residues: Glycerol-3-phosphate dehydrogenase [NAD(P)+] 2 (334 aa).

Residues tryptophan 16, arginine 36, arginine 37, and lysine 110 each contribute to the NADPH site. Sn-glycerol 3-phosphate is bound by residues lysine 110 and glycine 140. Alanine 144 provides a ligand contact to NADPH. Residues lysine 195, aspartate 248, serine 258, arginine 259, and asparagine 260 each coordinate sn-glycerol 3-phosphate. Catalysis depends on lysine 195, which acts as the Proton acceptor. Residue arginine 259 participates in NADPH binding. 2 residues coordinate NADPH: valine 282 and glutamate 284.

It belongs to the NAD-dependent glycerol-3-phosphate dehydrogenase family.

It localises to the cytoplasm. It catalyses the reaction sn-glycerol 3-phosphate + NAD(+) = dihydroxyacetone phosphate + NADH + H(+). The catalysed reaction is sn-glycerol 3-phosphate + NADP(+) = dihydroxyacetone phosphate + NADPH + H(+). It participates in membrane lipid metabolism; glycerophospholipid metabolism. Functionally, catalyzes the reduction of the glycolytic intermediate dihydroxyacetone phosphate (DHAP) to sn-glycerol 3-phosphate (G3P), the key precursor for phospholipid synthesis. The protein is Glycerol-3-phosphate dehydrogenase [NAD(P)+] 2 of Mycobacterium tuberculosis (strain ATCC 25618 / H37Rv).